Consider the following 139-residue polypeptide: Large ribosomal subunit protein uL22 (139 aa).

The interval 1-21 is disordered; it reads MTAPEQTYRNKKQRKQQHKLR. Over residues 9–21 the composition is skewed to basic residues; sequence RNKKQRKQQHKLR.

The protein belongs to the universal ribosomal protein uL22 family. Part of the 50S ribosomal subunit.

Its function is as follows. This protein binds specifically to 23S rRNA; its binding is stimulated by other ribosomal proteins, e.g. L4, L17, and L20. It is important during the early stages of 50S assembly. It makes multiple contacts with different domains of the 23S rRNA in the assembled 50S subunit and ribosome. The globular domain of the protein is located near the polypeptide exit tunnel on the outside of the subunit, while an extended beta-hairpin is found that lines the wall of the exit tunnel in the center of the 70S ribosome. This Deinococcus geothermalis (strain DSM 11300 / CIP 105573 / AG-3a) protein is Large ribosomal subunit protein uL22.